The primary structure comprises 417 residues: Tol-Pal system protein TolB (417 aa).

A signal peptide spans 1-16 (MRYLWLFLIGTIGLFA).

The protein belongs to the TolB family. The Tol-Pal system is composed of five core proteins: the inner membrane proteins TolA, TolQ and TolR, the periplasmic protein TolB and the outer membrane protein Pal. They form a network linking the inner and outer membranes and the peptidoglycan layer.

The protein resides in the periplasm. Its function is as follows. Part of the Tol-Pal system, which plays a role in outer membrane invagination during cell division and is important for maintaining outer membrane integrity. This chain is Tol-Pal system protein TolB, found in Helicobacter pylori (strain HPAG1).